Consider the following 334-residue polypeptide: Putative violet-sensitive opsin (334 aa).

The Extracellular segment spans residues 1–29 (MGKYFYLYENISKVGPYDGPQYYLAPTWA). A glycan (N-linked (GlcNAc...) asparagine) is linked at Asn-10. Residues 30 to 54 (FYLQAAFMGFVFFVGTPLNFVVLLA) form a helical membrane-spanning segment. Over 55–66 (TAKYKKLRVPLN) the chain is Cytoplasmic. A helical membrane pass occupies residues 67-88 (YILVNITFAGFIFVTFSVSQVF). Residues 89-106 (LASVRGYYFFGQTLCALE) are Extracellular-facing. A disulfide bridge links Cys-103 with Cys-179. The chain crosses the membrane as a helical span at residues 107 to 126 (AAVGAVAGLVTSWSLAVLSF). The Cytoplasmic segment spans residues 127–145 (ERYLVICKPFGAFKFGSNH). A helical transmembrane segment spans residues 146–168 (ALAAVIFTWFMGVVRCPPFFGWS). Residues 169 to 194 (RYIPEGLGCSCGPDWYTNCEEFSCAS) lie on the Extracellular side of the membrane. A helical membrane pass occupies residues 195–222 (YSKFLLVTCFICPITIIIFSYSQLLGAL). Residues 223-244 (RAVAAQQAESASTQKAEKEVSR) lie on the Cytoplasmic side of the membrane. A helical membrane pass occupies residues 245–272 (MIIVMVASFVTCYGPYALTAQYYAYSQD). At 273-279 (ENKDYRL) the chain is on the extracellular side. A helical transmembrane segment spans residues 280-301 (VTIPAFFSKSSCVYNPLIYAFM). Lys-288 carries the N6-(retinylidene)lysine modification. Over 302 to 334 (NKQFNGCIMEMVFGKKMEEASEVSSKTEVSTDS) the chain is Cytoplasmic.

It belongs to the G-protein coupled receptor 1 family. Opsin subfamily. Post-translationally, phosphorylated on some or all of the serine and threonine residues present in the C-terminal region. The three color pigments are found in the cone photoreceptor cells.

The protein localises to the membrane. Visual pigments are the light-absorbing molecules that mediate vision. They consist of an apoprotein, opsin, covalently linked to cis-retinal. The polypeptide is Putative violet-sensitive opsin (Oryzias latipes (Japanese rice fish)).